Here is a 598-residue protein sequence, read N- to C-terminus: DNA ligase (598 aa).

Position 258 (aspartate 258) interacts with ATP. Lysine 260 serves as the catalytic N6-AMP-lysine intermediate. ATP is bound by residues arginine 265, arginine 280, glutamate 310, phenylalanine 350, arginine 427, and lysine 433.

Belongs to the ATP-dependent DNA ligase family. Requires Mg(2+) as cofactor.

The enzyme catalyses ATP + (deoxyribonucleotide)n-3'-hydroxyl + 5'-phospho-(deoxyribonucleotide)m = (deoxyribonucleotide)n+m + AMP + diphosphate.. In terms of biological role, DNA ligase that seals nicks in double-stranded DNA during DNA replication, DNA recombination and DNA repair. The polypeptide is DNA ligase (Sulfolobus acidocaldarius (strain ATCC 33909 / DSM 639 / JCM 8929 / NBRC 15157 / NCIMB 11770)).